Here is a 54-residue protein sequence, read N- to C-terminus: Photoreceptor disk component PRCD (54 aa).

C2 is lipidated: S-palmitoyl cysteine. A disordered region spans residues 25–54; that stretch reads PEPSDVDGAARGSSLDADPQSSGREKEPLK.

Belongs to the PRCD family. As to quaternary structure, interacts with RHO/rhodopsin; the interaction promotes PRCD stability. In terms of processing, palmitoylated at Cys-2. Palmitoylation is essential for protein stability and trafficking to the photoreceptor outer segment, but does not appear to be essential for membrane localization. Probably palmitoylated by ZDHHC3. Post-translationally, phosphorylated.

Its subcellular location is the cell projection. It localises to the cilium. It is found in the photoreceptor outer segment. The protein resides in the membrane. The protein localises to the endoplasmic reticulum. Its subcellular location is the golgi apparatus. Its function is as follows. Involved in vision. In Homo sapiens (Human), this protein is Photoreceptor disk component PRCD.